The sequence spans 565 residues: Glycine/sarcosine/dimethylglycine N-methyltransferase (565 aa).

Positions 1 to 10 (MTKSVDDLAR) are enriched in basic and acidic residues. Residues 1–34 (MTKSVDDLARGDQAGDEQDPVHREQQTFGDNPLE) form a disordered region. S-adenosyl-L-methionine is bound by residues Y45, W53, R62, A86, D107, 134 to 135 (DW), and L152. Substrate-binding residues include N154, R187, and Y226.

The protein belongs to the class I-like SAM-binding methyltransferase superfamily. Glycine N-methyltransferase family. As to quaternary structure, monomer.

The catalysed reaction is glycine + 2 S-adenosyl-L-methionine = N,N-dimethylglycine + 2 S-adenosyl-L-homocysteine + 2 H(+). It catalyses the reaction sarcosine + 2 S-adenosyl-L-methionine = glycine betaine + 2 S-adenosyl-L-homocysteine + 2 H(+). It carries out the reaction glycine + S-adenosyl-L-methionine = sarcosine + S-adenosyl-L-homocysteine + H(+). The enzyme catalyses sarcosine + S-adenosyl-L-methionine = N,N-dimethylglycine + S-adenosyl-L-homocysteine + H(+). The catalysed reaction is N,N-dimethylglycine + S-adenosyl-L-methionine = glycine betaine + S-adenosyl-L-homocysteine + H(+). Its pathway is amine and polyamine biosynthesis; betaine biosynthesis via glycine pathway; betaine from glycine: step 1/3. It participates in amine and polyamine biosynthesis; betaine biosynthesis via glycine pathway; betaine from glycine: step 2/3. The protein operates within amine and polyamine biosynthesis; betaine biosynthesis via glycine pathway; betaine from glycine: step 3/3. Catalyzes the methylation of glycine, sarcosine and dimethylglycine to sarcosine, dimethylglycine and betaine, respectively, with S-adenosylmethionine (AdoMet) acting as the methyl donor. Shows low level of activity on glycine when expressed in E.coli. The protein is Glycine/sarcosine/dimethylglycine N-methyltransferase of Actinopolyspora halophila.